A 143-amino-acid polypeptide reads, in one-letter code: Hypoxic response protein 1 (143 aa).

CBS domains follow at residues 8 to 65 (MNAG…GLDP) and 73 to 131 (LARD…IVQF). Cysteines 14 and 39 form a disulfide. 2 residues coordinate Zn(2+): His-97 and His-122.

In terms of assembly, homodimer.

The protein localises to the secreted. Functionally, unlike some other CBS-domain containing proteins does not seem to bind AMP. The chain is Hypoxic response protein 1 (hrp1) from Mycobacterium tuberculosis (strain CDC 1551 / Oshkosh).